A 305-amino-acid polypeptide reads, in one-letter code: Carbamate kinase (305 aa).

It belongs to the carbamate kinase family.

The protein localises to the cytoplasm. It catalyses the reaction hydrogencarbonate + NH4(+) + ATP = carbamoyl phosphate + ADP + H2O + H(+). Its pathway is metabolic intermediate metabolism; carbamoyl phosphate degradation; CO(2) and NH(3) from carbamoyl phosphate: step 1/1. The polypeptide is Carbamate kinase (arcC) (Thermoplasma volcanium (strain ATCC 51530 / DSM 4299 / JCM 9571 / NBRC 15438 / GSS1)).